A 279-amino-acid chain; its full sequence is Biotin synthase (279 aa).

The 227-residue stretch at 1–227 (MKVYLCAISN…NAMIMVAGGR (227 aa)) folds into the Radical SAM core domain. Residues C16, C20, and C23 each contribute to the [4Fe-4S] cluster site. 3 residues coordinate [2Fe-2S] cluster: C60, C95, and C153.

Belongs to the radical SAM superfamily. Biotin synthase family. As to quaternary structure, homodimer. [4Fe-4S] cluster serves as cofactor. [2Fe-2S] cluster is required as a cofactor.

The catalysed reaction is (4R,5S)-dethiobiotin + (sulfur carrier)-SH + 2 reduced [2Fe-2S]-[ferredoxin] + 2 S-adenosyl-L-methionine = (sulfur carrier)-H + biotin + 2 5'-deoxyadenosine + 2 L-methionine + 2 oxidized [2Fe-2S]-[ferredoxin]. The protein operates within cofactor biosynthesis; biotin biosynthesis; biotin from 7,8-diaminononanoate: step 2/2. Functionally, catalyzes the conversion of dethiobiotin (DTB) to biotin by the insertion of a sulfur atom into dethiobiotin via a radical-based mechanism. The sequence is that of Biotin synthase from Nitratiruptor sp. (strain SB155-2).